The chain runs to 401 residues: Large ribosomal subunit protein uL3 (401 aa).

The disordered stretch occupies residues 1 to 22 (MSHRKFSAPRHGHMGFTPKKRS).

Belongs to the universal ribosomal protein uL3 family.

The protein localises to the cytoplasm. The L3 protein is a component of the large subunit of cytoplasmic ribosomes. The protein is Large ribosomal subunit protein uL3 (rpl-3) of Caenorhabditis elegans.